The following is a 483-amino-acid chain: Aspartyl/glutamyl-tRNA(Asn/Gln) amidotransferase subunit B (483 aa).

This sequence belongs to the GatB/GatE family. GatB subfamily. Heterotrimer of A, B and C subunits.

The catalysed reaction is L-glutamyl-tRNA(Gln) + L-glutamine + ATP + H2O = L-glutaminyl-tRNA(Gln) + L-glutamate + ADP + phosphate + H(+). It catalyses the reaction L-aspartyl-tRNA(Asn) + L-glutamine + ATP + H2O = L-asparaginyl-tRNA(Asn) + L-glutamate + ADP + phosphate + 2 H(+). Its function is as follows. Allows the formation of correctly charged Asn-tRNA(Asn) or Gln-tRNA(Gln) through the transamidation of misacylated Asp-tRNA(Asn) or Glu-tRNA(Gln) in organisms which lack either or both of asparaginyl-tRNA or glutaminyl-tRNA synthetases. The reaction takes place in the presence of glutamine and ATP through an activated phospho-Asp-tRNA(Asn) or phospho-Glu-tRNA(Gln). This is Aspartyl/glutamyl-tRNA(Asn/Gln) amidotransferase subunit B from Anaeromyxobacter sp. (strain Fw109-5).